The sequence spans 590 residues: Acetolactate synthase large subunit (590 aa).

Glu-61 serves as a coordination point for thiamine diphosphate. Residues Arg-163, 271–292, and 314–333 contribute to the FAD site; these read HGTAYANFAVSECDLLIALGAR and DIDPAEVGKNRIPQVAIVGD. The interval 405–484 is thiamine pyrophosphate binding; the sequence is QHQMWSAQFL…IKIVIINNRW (80 aa). 2 residues coordinate Mg(2+): Asp-455 and Asn-482.

The protein belongs to the TPP enzyme family. In terms of assembly, dimer of large and small chains. Mg(2+) serves as cofactor. It depends on thiamine diphosphate as a cofactor.

It localises to the plastid. It is found in the chloroplast. The catalysed reaction is 2 pyruvate + H(+) = (2S)-2-acetolactate + CO2. The protein operates within amino-acid biosynthesis; L-isoleucine biosynthesis; L-isoleucine from 2-oxobutanoate: step 1/4. It functions in the pathway amino-acid biosynthesis; L-valine biosynthesis; L-valine from pyruvate: step 1/4. The protein is Acetolactate synthase large subunit (ilvB) of Porphyra purpurea (Red seaweed).